Consider the following 103-residue polypeptide: O2 contryphan Vc1 (103 aa).

A signal peptide spans 1–23; it reads MGKLTILFLVAAALLSTQVMVQG. A propeptide spanning residues 24-67 is cleaved from the precursor; that stretch reads DGAHERTEAEEPQHHGAKRQDGTGGYPVDDVDMMQRIFRTPLKR. Residues 25-44 are compositionally biased toward basic and acidic residues; it reads GAHERTEAEEPQHHGAKRQD. The disordered stretch occupies residues 25–50; the sequence is GAHERTEAEEPQHHGAKRQDGTGGYP. Gln68 carries the pyrrolidone carboxylic acid modification. Cys70 and Cys83 are oxidised to a cystine. A propeptide spanning residues 99–103 is cleaved from the precursor; the sequence is RRGRQ.

This sequence belongs to the O2 superfamily. Pyrrolidone carboxylic acid at position 1 has no significant effect on the structure of contryphan-Vc1. In terms of tissue distribution, expressed by the venom gland.

The protein resides in the secreted. Functionally, unknown. Intracranial injection of the peptide into mice does not produce toxic effects. In addition, the peptide does not produce any observable changes to normal or depolarization-induced intracellular calcium levels in mouse dorsal root ganglion cells. The polypeptide is O2 contryphan Vc1 (Conus victoriae (Queen Victoria cone)).